A 437-amino-acid polypeptide reads, in one-letter code: GTPase Der (437 aa).

2 EngA-type G domains span residues 3–167 (NIVA…TKKV) and 176–352 (PAIA…DIRQ). Residues 9–16 (GRPNVGKS), 56–60 (DTGGW), 119–122 (NKAD), 182–189 (GKPNVGKS), 229–233 (DTAGI), and 294–297 (NKWD) each bind GTP. The region spanning 353 to 437 (IKIPTSQLNR…TPINIFMREK (85 aa)) is the KH-like domain.

This sequence belongs to the TRAFAC class TrmE-Era-EngA-EngB-Septin-like GTPase superfamily. EngA (Der) GTPase family. In terms of assembly, associates with the 50S ribosomal subunit.

In terms of biological role, GTPase that plays an essential role in the late steps of ribosome biogenesis. The protein is GTPase Der of Azobacteroides pseudotrichonymphae genomovar. CFP2.